Here is a 126-residue protein sequence, read N- to C-terminus: Small ribosomal subunit protein uS12 (126 aa).

A disordered region spans residues 1 to 28 (MPTINQLVRKGRQSETTKSKSPALQDCP). A 3-methylthioaspartic acid modification is found at D89. A disordered region spans residues 103-126 (DTQGVKDRKQARSKYGAKRAKAGK). Basic residues predominate over residues 113–126 (ARSKYGAKRAKAGK).

The protein belongs to the universal ribosomal protein uS12 family. Part of the 30S ribosomal subunit. Contacts proteins S8 and S17. May interact with IF1 in the 30S initiation complex.

Functionally, with S4 and S5 plays an important role in translational accuracy. Interacts with and stabilizes bases of the 16S rRNA that are involved in tRNA selection in the A site and with the mRNA backbone. Located at the interface of the 30S and 50S subunits, it traverses the body of the 30S subunit contacting proteins on the other side and probably holding the rRNA structure together. The combined cluster of proteins S8, S12 and S17 appears to hold together the shoulder and platform of the 30S subunit. This Paraburkholderia phytofirmans (strain DSM 17436 / LMG 22146 / PsJN) (Burkholderia phytofirmans) protein is Small ribosomal subunit protein uS12.